A 297-amino-acid chain; its full sequence is MDLVNHLNDKLLFAIPKKGRLYEKSVSILKGSDIKFHRSARLDIAISTNMPVALIFLPAADIPMFVGEGRCDLGITGVDQVRESEVDVNLPIDLQFGTCKLQVQVPVAGEYTSPEQLIGKTIVSSFVNLTKKYFAQLEGVPESEMVTRVKYVGGSVEASCALGVADAIVDLVESGETMRAAGLTAIATVLDTSAHLIESKNPKGDVELLRTIKSRIEGVMTAQKYVSCSYNAPENKLPELLKITPGRRAPTISQINDSGWVAVSSMIERKNKGDIMDDLKKNGAEDIMVFEISNCRV.

This sequence belongs to the ATP phosphoribosyltransferase family.

It is found in the cytoplasm. It catalyses the reaction 1-(5-phospho-beta-D-ribosyl)-ATP + diphosphate = 5-phospho-alpha-D-ribose 1-diphosphate + ATP. Its pathway is amino-acid biosynthesis; L-histidine biosynthesis; L-histidine from 5-phospho-alpha-D-ribose 1-diphosphate: step 1/9. In terms of biological role, catalyzes the condensation of ATP and 5-phosphoribose 1-diphosphate to form N'-(5'-phosphoribosyl)-ATP (PR-ATP). Has a crucial role in the pathway because the rate of histidine biosynthesis seems to be controlled primarily by regulation of the enzymatic activity. The sequence is that of ATP phosphoribosyltransferase (HIS1) from Kluyveromyces lactis (strain ATCC 8585 / CBS 2359 / DSM 70799 / NBRC 1267 / NRRL Y-1140 / WM37) (Yeast).